We begin with the raw amino-acid sequence, 572 residues long: Receptor-type adenylate cyclase GRESAG 4.2 (572 aa).

The Extracellular segment spans residues 1–225 (RKTLLTFGLN…PNGNALTPAQ (225 aa)). 3 N-linked (GlcNAc...) asparagine glycosylation sites follow: asparagine 10, asparagine 77, and asparagine 152. Residues 226–251 (LDWCGWCRFACADTGSRLTVFLCCIM) form a helical membrane-spanning segment. Residues 252-572 (RNKRDNDNAP…TVRRLSVALQ (321 aa)) lie on the Cytoplasmic side of the membrane. Positions 269–424 (TLIFTDIESS…QTANTAARTE (156 aa)) constitute a Guanylate cyclase domain. Mg(2+) is bound by residues aspartate 274 and aspartate 317.

The protein belongs to the adenylyl cyclase class-3 family. Mg(2+) serves as cofactor.

The protein resides in the cell membrane. It carries out the reaction ATP = 3',5'-cyclic AMP + diphosphate. Could act as a receptor for an unknown ligand. The sequence is that of Receptor-type adenylate cyclase GRESAG 4.2 (GRESAG 4.2) from Trypanosoma brucei brucei.